The primary structure comprises 361 residues: Alanine racemase (361 aa).

Lys34 serves as the catalytic Proton acceptor; specific for D-alanine. N6-(pyridoxal phosphate)lysine is present on Lys34. Residue Arg129 participates in substrate binding. The active-site Proton acceptor; specific for L-alanine is Tyr254. Residue Met302 coordinates substrate.

Belongs to the alanine racemase family. Requires pyridoxal 5'-phosphate as cofactor.

It catalyses the reaction L-alanine = D-alanine. The catalysed reaction is L-serine = D-serine. It functions in the pathway amino-acid biosynthesis; D-alanine biosynthesis; D-alanine from L-alanine: step 1/1. In terms of biological role, catalyzes the interconversion of L-alanine and D-alanine. Likely plays an important role in supplying D-alanine, which is an indispensable constituent in the biosynthesis of bacterial cell-wall peptidoglycan. To a lesser extent, is also able to racemize L-serine and D-serine. Does not act on other proteinogenic amino-acids. The polypeptide is Alanine racemase (alr1) (Vibrio cholerae serotype O1 (strain ATCC 39315 / El Tor Inaba N16961)).